A 66-amino-acid chain; its full sequence is UPF0457 protein BA_2525/GBAA_2525/BAS2348 (66 aa).

This sequence belongs to the UPF0457 family.

This is UPF0457 protein BA_2525/GBAA_2525/BAS2348 from Bacillus anthracis.